Consider the following 340-residue polypeptide: Mitochondrial import receptor subunit TOM40 homolog 2 (340 aa).

Residues 1–37 (MGNVMASTADAESSRGRGHLSAGLRLPEAPQYSGGVP) are disordered.

The protein belongs to the Tom40 family. In terms of assembly, forms part of the preprotein translocase of the outer mitochondrial membrane (TOM complex). Interacts with mitochondrial targeting sequences. As to expression, only expressed in the male germline, detected in primary spermatocytes as well as post-meiotic stages. Not detected in stem cells and spermatogonia near the tip of the testis.

The protein localises to the mitochondrion outer membrane. Functionally, channel-forming protein essential for import of protein precursors into mitochondria. This is Mitochondrial import receptor subunit TOM40 homolog 2 from Drosophila melanogaster (Fruit fly).